The primary structure comprises 576 residues: MNIQALLSEKVSQALTAAGAPADSEAQVRQSAKAQFGDYQANGVMAVAKKLGMPPRQLAEKVVQLLALEGIAEKTEIAGPGFINIFLDKQWVASQVENALNAPKLGLTPVEPQTIVIDYSAPNVAKEMHVGHLRSTIIGDAAARTLEFLGHNIIRANHVGDWGTQFGMLIAYLEKMQNESANEMDLSDLEAFYREAKKHYDEDADFAERARGYVVKLQGGDEYCRQMWRKLVDITMTQNQINYERLNVTLTKQDVMGESLYNSMLPNIVADLKAKGLAVESEGATVVFLDEYKNKEGEPMGVIIQKKDGGYLYTTTDIACAKYRYETLNADRVLYYIDSRQHQHLMQAWTIVRKAGYVPDSVSLEHHMFGMMLGKDGKPFKTRAGGTIKLSELLDEAYGRALKLIAEKNPQMESDELAALAKVVSIGAIKYADLSKSRTTDYVFDWDNMLAFEGNTAPYMQYAYTRVASIFKRAGIQEDTLTQPITLNDEREFALATRLLQFEETITSVAREGTPHVMCSYLYDLAGLFSGFYEHCPILNAENDDVRQSRLRLALLTAKTLKQGLDTLGIETVDKM.

The 'HIGH' region motif lies at 122–132 (PNVAKEMHVGH).

It belongs to the class-I aminoacyl-tRNA synthetase family. As to quaternary structure, monomer.

Its subcellular location is the cytoplasm. The enzyme catalyses tRNA(Arg) + L-arginine + ATP = L-arginyl-tRNA(Arg) + AMP + diphosphate. The protein is Arginine--tRNA ligase of Pectobacterium atrosepticum (strain SCRI 1043 / ATCC BAA-672) (Erwinia carotovora subsp. atroseptica).